Here is a 127-residue protein sequence, read N- to C-terminus: UPF0166 protein PYRAB06660 (127 aa).

This sequence belongs to the UPF0166 family.

The sequence is that of UPF0166 protein PYRAB06660 from Pyrococcus abyssi (strain GE5 / Orsay).